The sequence spans 142 residues: Transcription antitermination protein NusB (142 aa).

Belongs to the NusB family.

In terms of biological role, involved in transcription antitermination. Required for transcription of ribosomal RNA (rRNA) genes. Binds specifically to the boxA antiterminator sequence of the ribosomal RNA (rrn) operons. The sequence is that of Transcription antitermination protein NusB from Roseiflexus sp. (strain RS-1).